Consider the following 280-residue polypeptide: Phosphatidylserine decarboxylase proenzyme (280 aa).

Active-site charge relay system; for autoendoproteolytic cleavage activity residues include Asp88, His145, and Ser248. The active-site Schiff-base intermediate with substrate; via pyruvic acid; for decarboxylase activity is Ser248. Residue Ser248 is modified to Pyruvic acid (Ser); by autocatalysis.

It belongs to the phosphatidylserine decarboxylase family. PSD-B subfamily. Prokaryotic type I sub-subfamily. Heterodimer of a large membrane-associated beta subunit and a small pyruvoyl-containing alpha subunit. Pyruvate is required as a cofactor. In terms of processing, is synthesized initially as an inactive proenzyme. Formation of the active enzyme involves a self-maturation process in which the active site pyruvoyl group is generated from an internal serine residue via an autocatalytic post-translational modification. Two non-identical subunits are generated from the proenzyme in this reaction, and the pyruvate is formed at the N-terminus of the alpha chain, which is derived from the carboxyl end of the proenzyme. The autoendoproteolytic cleavage occurs by a canonical serine protease mechanism, in which the side chain hydroxyl group of the serine supplies its oxygen atom to form the C-terminus of the beta chain, while the remainder of the serine residue undergoes an oxidative deamination to produce ammonia and the pyruvoyl prosthetic group on the alpha chain. During this reaction, the Ser that is part of the protease active site of the proenzyme becomes the pyruvoyl prosthetic group, which constitutes an essential element of the active site of the mature decarboxylase.

It localises to the cell membrane. The enzyme catalyses a 1,2-diacyl-sn-glycero-3-phospho-L-serine + H(+) = a 1,2-diacyl-sn-glycero-3-phosphoethanolamine + CO2. The protein operates within phospholipid metabolism; phosphatidylethanolamine biosynthesis; phosphatidylethanolamine from CDP-diacylglycerol: step 2/2. Functionally, catalyzes the formation of phosphatidylethanolamine (PtdEtn) from phosphatidylserine (PtdSer). The chain is Phosphatidylserine decarboxylase proenzyme from Methylobacillus flagellatus (strain ATCC 51484 / DSM 6875 / VKM B-1610 / KT).